The following is a 550-amino-acid chain: Arginine--tRNA ligase (550 aa).

Positions 130–140 match the 'HIGH' region motif; it reads ANPTGPIHLGG.

Belongs to the class-I aminoacyl-tRNA synthetase family. Monomer.

It is found in the cytoplasm. The catalysed reaction is tRNA(Arg) + L-arginine + ATP = L-arginyl-tRNA(Arg) + AMP + diphosphate. In Rhodococcus opacus (strain B4), this protein is Arginine--tRNA ligase.